Here is a 353-residue protein sequence, read N- to C-terminus: D-glycerol 3-phosphate phosphatase (353 aa).

The Nucleophile role is filled by aspartate 14. 3 residues coordinate Mg(2+): aspartate 14, aspartate 16, and aspartate 209. Aspartate 16 acts as the Proton donor in catalysis.

This sequence belongs to the HAD-like hydrolase superfamily. Homodimer. Mg(2+) serves as cofactor. Co(2+) is required as a cofactor. It depends on Mn(2+) as a cofactor.

The enzyme catalyses sn-glycerol 1-phosphate + H2O = glycerol + phosphate. It functions in the pathway glycerolipid metabolism. In terms of biological role, dephosphorylates D-glycerol 3-phosphate (sn-glycerol 1-phosphate). Is the final enzyme involved in the recycling/catabolism of glycerophospholipid polar heads. To a lesser extent, is also able to act on glycerol 2-phosphate and D-ribulose 5-phosphate, but cannot use D-glyceraldehyde 3-phosphate, dihydroxyacetone-phosphate, UMP or GMP as substrates. In Mycobacterium tuberculosis (strain ATCC 25618 / H37Rv), this protein is D-glycerol 3-phosphate phosphatase.